The following is a 588-amino-acid chain: Zeta-carotene desaturase, chloroplastic/chromoplastic (588 aa).

This sequence belongs to the zeta carotene desaturase family. The cofactor is NAD(+). NADP(+) is required as a cofactor. Requires FAD as cofactor.

The protein localises to the plastid. The protein resides in the chloroplast. It localises to the chromoplast. It catalyses the reaction 9,9'-di-cis-zeta-carotene + 2 a quinone = 7,7',9,9'-tetra-cis-lycopene + 2 a quinol. The protein operates within carotenoid biosynthesis; lycopene biosynthesis. In terms of biological role, catalyzes the conversion of zeta-carotene to lycopene via the intermediary of neurosporene. It carries out two consecutive desaturations (introduction of double bonds) at positions C-7 and C-7'. This Solanum lycopersicum (Tomato) protein is Zeta-carotene desaturase, chloroplastic/chromoplastic (ZDS).